Here is a 163-residue protein sequence, read N- to C-terminus: Lipoprotein signal peptidase (163 aa).

3 consecutive transmembrane segments (helical) span residues 7 to 27 (LSFLWLSAVAFVIDLLTKYLV), 64 to 84 (WQKYFFIALALIISAVLVYLL), and 99 to 119 (ALIIGGALANMADRAYHGFVV). Active-site residues include D120 and D138. A helical transmembrane segment spans residues 133-153 (VFNVADIAICVGVGLLILDSF).

The protein belongs to the peptidase A8 family.

The protein resides in the cell inner membrane. The catalysed reaction is Release of signal peptides from bacterial membrane prolipoproteins. Hydrolyzes -Xaa-Yaa-Zaa-|-(S,diacylglyceryl)Cys-, in which Xaa is hydrophobic (preferably Leu), and Yaa (Ala or Ser) and Zaa (Gly or Ala) have small, neutral side chains.. It functions in the pathway protein modification; lipoprotein biosynthesis (signal peptide cleavage). In terms of biological role, this protein specifically catalyzes the removal of signal peptides from prolipoproteins. This Actinobacillus succinogenes (strain ATCC 55618 / DSM 22257 / CCUG 43843 / 130Z) protein is Lipoprotein signal peptidase.